The chain runs to 78 residues: Large ribosomal subunit protein bL28 (78 aa).

Belongs to the bacterial ribosomal protein bL28 family.

In Hamiltonella defensa subsp. Acyrthosiphon pisum (strain 5AT), this protein is Large ribosomal subunit protein bL28.